The chain runs to 1293 residues: MSGPLEGADGGGDPRPGEPFCPGGVPSPGAPQHRPCPGPSLADDTDANSNGSSGNESNGHESRGASQRSSHSSSSGNGKDSALLETTESSKSTNSQSPSPPSSSIAYSLLSASSEQDNPSTSGCSSEQSARARTQKELMTALRELKLRLPPERRGKGRSGTLATLQYALACVKQVQANQEYYQQWSLEEGEPCAMDMSTYTLEELEHITSEYTLRNQDTFSVAVSFLTGRIVYISEQAGVLLRCKRDVFRGARFSELLAPQDVGVFYGSTTPSRLPTWGTGTSAGSGLKDFTQEKSVFCRIRGGPDRDPGPRYQPFRLTPYVTKIRVSDGAPAQPCCLLIAERIHSGYEAPRIPPDKRIFTTRHTPSCLFQDVDERAAPLLGYLPQDLLGAPVLLFLHPEDRPLMLAIHKKILQLAGQPFDHSPIRFCARNGEYVTMDTSWAGFVHPWSRKVAFVLGRHKVRTAPLNEDVFTPPVPSPAPSLDSDIQELSEQIHRLLLQPVHSSSTTGLCGVGPLMSPGPLHSPGSSSDSNGGDAEGPGPPAPVTFQQICKDVHLVKHQGQQLFIESRAKPPPRPRLLATGTFKAKVLPCQSPNPELEVAPAPDQASLALAPEEPERKESSGCSYQQINCLDSILRYLESCNIPNTTKRKCASSSCTASSASDDDKQRAGPVPVGAKKDTSSAVLSGEGATPRKEPVVGGTLSPLALANKAESVVSVTSQCSFSSTIVHVGDKKPPESDIIMMEDLPGLAPGPAPSPAPSPTVAPDPAPDAYRPVGLTKAVLSLHTQKEEQAFLSRFRDLGRLRGLDTSSVAPSAPGCHHGPIPSGRRHHCRSKAKRSRHHQTPRPETPCYVSHPSPVPSSGPWPPPPATTPFPAVVQPYPLPVFSPRGGPQPLPPAPTSVSPATFPSPLVTPMVALVLPNYLFPSPTSYPYGVSQAPVEGPPTPASHSPSPSLPPPPPSPPHRPDSPLFNSRCSSPLQLNLLQLEESPRTEGGAAAGGPGSSAGPLPPSEESAEPEPRLVEVTESSNQDALSGSSDLLELLLQEDSRSGTGSAASGSLGSGLGSGSGSGSHEGGSTSASITRSSQSSHTSKYFGSIDSSEAEAGAAQARTEPGDQVIKYVLQDPIWLLMANADQHVMMTYQVPSRDAASVLKQDRERLRAMQKQQPRFSEDQRRELGAVHSWVRKGQLPQALDVTACVDCGSSVQDPGHSDDPLFSELDGLGLEPMEEGGGEGGGVGGGGGGVGGGGGDGGEEAQTQIGTKGSSSQDSAMEEEEQGGSSSSPALPAEENGTS.

The segment at 1–134 is disordered; sequence MSGPLEGADG…SSEQSARART (134 aa). The interaction with BTRC stretch occupies residues 1–151; that stretch reads MSGPLEGADG…LRELKLRLPP (151 aa). Low complexity-rich tracts occupy residues 48–57 and 64–115; these read NSNGSSGNES and GASQ…ASSE. Polar residues predominate over residues 116–132; sequence QDNPSTSGCSSEQSARA. The residue at position 121 (Thr121) is a Phosphothreonine; by CSNK1E. 2 positions are modified to phosphoserine; by CSNK1E: Ser122 and Ser126. The short motif at 138–147 is the Nuclear export signal 1 element; it reads LMTALRELKL. 2 PAS domains span residues 208–275 and 348–414; these read ITSE…PSRL and YEAP…KILQ. The PAC domain occupies 422–465; the sequence is HSPIRFCARNGEYVTMDTSWAGFVHPWSRKVAFVLGRHKVRTAP. Residues 489 to 498 carry the Nuclear export signal 2 motif; the sequence is LSEQIHRLLL. Disordered stretches follow at residues 509 to 544 and 647 to 697; these read LCGV…PAPV and TKRK…KEPV. Composition is skewed to low complexity over residues 513 to 533 and 652 to 661; these read GPLM…SNGG and ASSSCTASSA. A required for phosphorylation by CSNK1E region spans residues 596–814; it reads ELEVAPAPDQ…GLDTSSVAPS (219 aa). Phosphoserine occurs at positions 660, 662, and 703. Disordered stretches follow at residues 748–771, 808–870, 935–1094, and 1204–1293; these read GLAP…APDA, TSSV…PPAT, SQAP…SKYF, and SVQD…NGTS. Over residues 750 to 768 the composition is skewed to pro residues; it reads APGPAPSPAPSPTVAPDPA. Residue Ser814 is modified to Phosphoserine. A Nuclear localization signal motif is present at residues 823–839; sequence IPSGRRHHCRSKAKRSR. Residues 826–843 are compositionally biased toward basic residues; it reads GRRHHCRSKAKRSRHHQT. Composition is skewed to pro residues over residues 856–870 and 952–962; these read SPVP…PPAT and PSLPPPPPSPP. Residues 969-982 show a composition bias toward polar residues; sequence LFNSRCSSPLQLNL. Residues Ser975 and Ser976 each carry the phosphoserine modification. Residues 978 to 985 carry the Nuclear export signal 3 motif; the sequence is LQLNLLQL. Low complexity predominate over residues 1032–1058; that stretch reads LSGSSDLLELLLQEDSRSGTGSAASGS. An LXXLL motif is present at residues 1039 to 1043; the sequence is LELLL. Gly residues predominate over residues 1059–1073; the sequence is LGSGLGSGSGSGSHE. Positions 1074–1091 are enriched in low complexity; that stretch reads GGSTSASITRSSQSSHTS. A CRY binding domain region spans residues 1145-1293; that stretch reads SRDAASVLKQ…ALPAEENGTS (149 aa). Residues 1232–1250 are compositionally biased toward gly residues; that stretch reads GEGGGVGGGGGGVGGGGGD. Polar residues predominate over residues 1255 to 1269; that stretch reads AQTQIGTKGSSSQDS.

As to quaternary structure, homodimer. Component of the circadian core oscillator, which includes the CRY proteins, CLOCK or NPAS2, BMAL1 or BMAL2, CSNK1D and/or CSNK1E, TIMELESS, and the PER proteins. Interacts directly with TIMELESS, PER2, PER3, CRY1 and CRY2. Interacts with BMAL1 and CLOCK. Interacts with GPRASP1. Interacts (phosphorylated) with BTRC and FBXW11; the interactions trigger proteasomal degradation. Interacts with NONO and WDR5. Interacts with SFPQ. Interacts with USP2. Interacts with HNF4A. In terms of processing, phosphorylated on serine residues by CSNK1D, CSNK1E and probably also by CSNK1G2. Phosphorylation by CSNK1D or CSNK1E promotes nuclear location of PER proteins as well as ubiquitination and subsequent degradation. May be dephosphorylated by PP1. Post-translationally, ubiquitinated; requires phosphorylation by CSNK1E and interaction with BTRC and FBXW11. Deubiquitinated by USP2. As to expression, expressed in pancreas. In the CNS, highly expressed in the SCN, internal granular layer of granular cells of the olfactory bulb, tuberculum olfactorium, piriform cortex, gyrus dentatus of the hippocampus, cerebellum, pars tuberalis/median eminence, and pituitary, and moderately in the tenia tecta, caudate putamen, accumbens nucleus, spinal cord, superior and inferior colliculus and pineal gland.

It localises to the nucleus. The protein resides in the cytoplasm. In terms of biological role, transcriptional repressor which forms a core component of the circadian clock. The circadian clock, an internal time-keeping system, regulates various physiological processes through the generation of approximately 24 hour circadian rhythms in gene expression, which are translated into rhythms in metabolism and behavior. It is derived from the Latin roots 'circa' (about) and 'diem' (day) and acts as an important regulator of a wide array of physiological functions including metabolism, sleep, body temperature, blood pressure, endocrine, immune, cardiovascular, and renal function. Consists of two major components: the central clock, residing in the suprachiasmatic nucleus (SCN) of the brain, and the peripheral clocks that are present in nearly every tissue and organ system. Both the central and peripheral clocks can be reset by environmental cues, also known as Zeitgebers (German for 'timegivers'). The predominant Zeitgeber for the central clock is light, which is sensed by retina and signals directly to the SCN. The central clock entrains the peripheral clocks through neuronal and hormonal signals, body temperature and feeding-related cues, aligning all clocks with the external light/dark cycle. Circadian rhythms allow an organism to achieve temporal homeostasis with its environment at the molecular level by regulating gene expression to create a peak of protein expression once every 24 hours to control when a particular physiological process is most active with respect to the solar day. Transcription and translation of core clock components (CLOCK, NPAS2, BMAL1, BMAL2, PER1, PER2, PER3, CRY1 and CRY2) plays a critical role in rhythm generation, whereas delays imposed by post-translational modifications (PTMs) are important for determining the period (tau) of the rhythms (tau refers to the period of a rhythm and is the length, in time, of one complete cycle). A diurnal rhythm is synchronized with the day/night cycle, while the ultradian and infradian rhythms have a period shorter and longer than 24 hours, respectively. Disruptions in the circadian rhythms contribute to the pathology of cardiovascular diseases, cancer, metabolic syndromes and aging. A transcription/translation feedback loop (TTFL) forms the core of the molecular circadian clock mechanism. Transcription factors, CLOCK or NPAS2 and BMAL1 or BMAL2, form the positive limb of the feedback loop, act in the form of a heterodimer and activate the transcription of core clock genes and clock-controlled genes (involved in key metabolic processes), harboring E-box elements (5'-CACGTG-3') within their promoters. The core clock genes: PER1/2/3 and CRY1/2 which are transcriptional repressors form the negative limb of the feedback loop and interact with the CLOCK|NPAS2-BMAL1|BMAL2 heterodimer inhibiting its activity and thereby negatively regulating their own expression. This heterodimer also activates nuclear receptors NR1D1/2 and RORA/B/G, which form a second feedback loop and which activate and repress BMAL1 transcription, respectively. Regulates circadian target genes expression at post-transcriptional levels, but may not be required for the repression at transcriptional level. Controls PER2 protein decay. Represses CRY2 preventing its repression on CLOCK/BMAL1 target genes such as FXYD5 and SCNN1A in kidney and PPARA in liver. Besides its involvement in the maintenance of the circadian clock, has an important function in the regulation of several processes. Participates in the repression of glucocorticoid receptor NR3C1/GR-induced transcriptional activity by reducing the association of NR3C1/GR to glucocorticoid response elements (GREs) by BMAL1:CLOCK. Plays a role in the modulation of the neuroinflammatory state via the regulation of inflammatory mediators release, such as CCL2 and IL6. In spinal astrocytes, negatively regulates the MAPK14/p38 and MAPK8/JNK MAPK cascades as well as the subsequent activation of NFkappaB. Coordinately regulates the expression of multiple genes that are involved in the regulation of renal sodium reabsorption. Can act as gene expression activator in a gene and tissue specific manner, in kidney enhances WNK1 and SLC12A3 expression in collaboration with CLOCK. Modulates hair follicle cycling. Represses the CLOCK-BMAL1 induced transcription of BHLHE40/DEC1. This chain is Period circadian protein homolog 1, found in Rattus norvegicus (Rat).